A 268-amino-acid chain; its full sequence is Probable ribosomal RNA small subunit methyltransferase A (268 aa).

Residues H23, L25, G50, E71, D95, and N110 each coordinate S-adenosyl-L-methionine.

This sequence belongs to the class I-like SAM-binding methyltransferase superfamily. rRNA adenine N(6)-methyltransferase family. RsmA subfamily.

The protein localises to the cytoplasm. Its function is as follows. Specifically dimethylates two adjacent adenosines in the loop of a conserved hairpin near the 3'-end of 16S rRNA in the 30S particle. May play a critical role in biogenesis of 30S subunits. This is Probable ribosomal RNA small subunit methyltransferase A from Pyrococcus horikoshii (strain ATCC 700860 / DSM 12428 / JCM 9974 / NBRC 100139 / OT-3).